The sequence spans 97 residues: MDITDIRIKKVESKNSGSKLLAYVAVTFDNCLVLHNIRVIKGQKGVFIAMPNRRTRVGEYKDIVHPISQDFRKTLQTSIFKEYVRENPADLELELDF.

The protein belongs to the SpoVG family.

Its function is as follows. Could be involved in septation. The protein is Putative septation protein SpoVG of Borreliella afzelii (strain PKo) (Borrelia afzelii).